The sequence spans 328 residues: 3,4-dihydroxyphenylacetaldehyde synthase 2 (328 aa).

Residue N111 is part of the active site. N6-(pyridoxal phosphate)lysine is present on K222.

Belongs to the group II decarboxylase family. Pyridoxal 5'-phosphate serves as cofactor.

The catalysed reaction is L-dopa + O2 + H2O + H(+) = 3,4-dihydroxyphenylacetaldehyde + H2O2 + NH4(+) + CO2. In terms of biological role, catalyzes the decarboxylation-oxidative deamination of L-3,4-dihydroxyphenylalanine (L-DOPA) to 3,4-dihydroxylphenylacetaldehyde (DHPAA). Involved in cuticle development. Probably responsible for the protein cross-linking during the development of flexible cuticles. This is 3,4-dihydroxyphenylacetaldehyde synthase 2 (amd) from Drosophila simulans (Fruit fly).